Here is a 449-residue protein sequence, read N- to C-terminus: MVKPTDYLTVTALTQYLKAKFERDPYLDRVYLTGEISNFRLRPNAHQYFSLKDNKAKISAIMFKSAFEKVKFTPEEGMKVLIVGRISLYEASGNYQIYVERMEPDGLGALYQAYEQLKAKLATEGLFDAPKQPLVRFPKRIAVITSPSGAVIRDIITTTQRRYPIAQLVLFPAVVQGDGAADVLVERLKQVNEHGDFDTIIIGRGGGSIEDLWPFNEERVARAIVASQIPVISSVGHETDTTIADLVADVRAATPTAAAELATPVLTDEILKLQQQRLRLYQAFSKTVALNKKQLDHLQNSYVLKQPKRLYDGYLQNVDQLQRRLLTAQQQLLKDRRQQVQLLQQRLMAQSPLMAVRQAQKDVTEQQRRLNQAMNRLMADRRQKAAQVIAALDLVSPLKILGRGFAYVTDDQQQMLKKVADFKTQQPIELHVQDGLVTAEVVATHKGEE.

Belongs to the XseA family. Heterooligomer composed of large and small subunits.

It is found in the cytoplasm. It carries out the reaction Exonucleolytic cleavage in either 5'- to 3'- or 3'- to 5'-direction to yield nucleoside 5'-phosphates.. In terms of biological role, bidirectionally degrades single-stranded DNA into large acid-insoluble oligonucleotides, which are then degraded further into small acid-soluble oligonucleotides. This is Exodeoxyribonuclease 7 large subunit from Latilactobacillus sakei subsp. sakei (strain 23K) (Lactobacillus sakei subsp. sakei).